The chain runs to 311 residues: Heme A synthase (311 aa).

Residues M1–K6 are Cytoplasmic-facing. Residues W7–T27 traverse the membrane as a helical segment. The Extracellular segment spans residues K28–R62. A disulfide bridge links C35 with C42. The active site involves E58. H61 contributes to the heme o binding site. The chain crosses the membrane as a helical span at residues L63–Y83. The Cytoplasmic segment spans residues K84–T91. The helical transmembrane segment at L92–V112 threads the bilayer. Over W113–A121 the chain is Extracellular. Residues I122–F142 form a helical membrane-spanning segment. Position 123 (H123) interacts with heme o. Topologically, residues E143–M159 are cytoplasmic. A helical membrane pass occupies residues K160–V180. At R181–M211 the chain is on the extracellular side. A disulfide bridge links C189 with C195. A helical membrane pass occupies residues G212–I232. Residue H213 coordinates heme b. Residues R233 to W243 lie on the Cytoplasmic side of the membrane. The helical transmembrane segment at G244 to F264 threads the bilayer. At T265–M271 the chain is on the extracellular side. Residues A272–L292 traverse the membrane as a helical segment. H275 lines the heme b pocket. The Cytoplasmic portion of the chain corresponds to G293–K311.

The protein belongs to the COX15/CtaA family. Type 1 subfamily. In terms of assembly, interacts with CtaB. It depends on heme b as a cofactor.

It is found in the cell membrane. The enzyme catalyses Fe(II)-heme o + 2 A + H2O = Fe(II)-heme a + 2 AH2. It participates in porphyrin-containing compound metabolism; heme A biosynthesis; heme A from heme O: step 1/1. Catalyzes the conversion of heme O to heme A by two successive hydroxylations of the methyl group at C8. The first hydroxylation forms heme I, the second hydroxylation results in an unstable dihydroxymethyl group, which spontaneously dehydrates, resulting in the formyl group of heme A. This Bacillus cereus (strain 03BB102) protein is Heme A synthase.